A 27-amino-acid polypeptide reads, in one-letter code: U1-poneritoxin-Na3b (27 aa).

This sequence belongs to the ponericin-G family. In terms of tissue distribution, expressed by the venom gland.

Its subcellular location is the secreted. In terms of biological role, shows a broad spectrum of activity against both Gram-positive and Gram-negative bacteria. Also has antimicrobial activity against S.cerevisiae. Has insecticidal and non-hemolytic activity. This Neoponera apicalis (Ant) protein is U1-poneritoxin-Na3b.